Consider the following 465-residue polypeptide: Sensor histidine kinase ZraS (465 aa).

Over 1-14 (MSFIRLHKDAAATW) the chain is Cytoplasmic. Residues 15–35 (LSRLLPAAIFILVGLFSIMVI) form a helical membrane-spanning segment. Over 36-202 (RDYGRESAAA…AATQAREWRN (167 aa)) the chain is Periplasmic. Residues 203 to 223 (TLIVLSALAAVLLATLLAFFW) form a helical membrane-spanning segment. Topologically, residues 224 to 465 (HQRYQRSHRE…WLPVIARQQD (242 aa)) are cytoplasmic. In terms of domain architecture, Histidine kinase spans 253–461 (GVAHEIRNPL…VFTIWLPVIA (209 aa)). His-256 carries the post-translational modification Phosphohistidine; by autocatalysis.

Autophosphorylated.

It localises to the cell inner membrane. The enzyme catalyses ATP + protein L-histidine = ADP + protein N-phospho-L-histidine.. Activity of the ZraS/ZraR two-component system is repressed by the zinc-bound form of ZraP, which probably interacts with the periplasmic region of ZraS. Its function is as follows. Part of the Zra signaling pathway, an envelope stress response (ESR) system composed of the periplasmic accessory protein ZraP, the histidine kinase ZraS and the transcriptional regulator ZraR. The ZraPSR system contributes to antibiotic resistance and is important for membrane integrity in the presence of membrane-targeting biocides. ZraS is a member of the two-component regulatory system ZraS/ZraR. Functions as a membrane-associated sensor kinase that phosphorylates ZraR in response to high concentrations of Zn(2+) or Pb(2+) in the medium. In Salmonella typhimurium (strain LT2 / SGSC1412 / ATCC 700720), this protein is Sensor histidine kinase ZraS.